A 434-amino-acid chain; its full sequence is Glutamate-1-semialdehyde 2,1-aminomutase 2 (434 aa).

Residue K270 is modified to N6-(pyridoxal phosphate)lysine.

It belongs to the class-III pyridoxal-phosphate-dependent aminotransferase family. HemL subfamily. Homodimer. Pyridoxal 5'-phosphate serves as cofactor.

The protein resides in the cytoplasm. It catalyses the reaction (S)-4-amino-5-oxopentanoate = 5-aminolevulinate. It functions in the pathway porphyrin-containing compound metabolism; protoporphyrin-IX biosynthesis; 5-aminolevulinate from L-glutamyl-tRNA(Glu): step 2/2. The protein is Glutamate-1-semialdehyde 2,1-aminomutase 2 of Bacillus cereus (strain G9842).